The following is a 1330-amino-acid chain: Ubinuclein-2 (1330 aa).

Positions 1–113 are disordered; that stretch reads MAEPRRVAFI…PPPRPPKETV (113 aa). At serine 13 the chain carries Phosphoserine. Basic and acidic residues-rich tracts occupy residues 16-31 and 55-67; these read RRRE…EPPR and ARDK…EVSR. A compositionally biased stretch (pro residues) spans 81–96; it reads PEPPPPPLPLQTPPPR. The residue at position 229 (threonine 229) is a Phosphothreonine. Serine 236 is subject to Phosphoserine. Disordered stretches follow at residues 236-304 and 322-345; these read SDTE…KKRY and DALK…PKPP. Threonine 238 is modified (phosphothreonine). Lysine 258 is covalently cross-linked (Glycyl lysine isopeptide (Lys-Gly) (interchain with G-Cter in SUMO2)). Serine 297 carries the post-translational modification Phosphoserine. Phosphoserine occurs at positions 402, 405, 408, and 570. Disordered regions lie at residues 559 to 583, 767 to 789, 801 to 835, 866 to 909, 964 to 991, 1021 to 1202, and 1292 to 1330; these read LQAD…KRVI, NKGP…GLRE, LATP…DLAH, GLQR…SLTQ, YRLP…APST, PKLA…SSVV, and PGTQ…RKPQ. Over residues 560-570 the composition is skewed to basic and acidic residues; the sequence is QADEEREKNGS. Composition is skewed to polar residues over residues 767-780 and 809-818; these read NKGP…NVPT and SPQTAHSSSL. The span at 866 to 895 shows a compositional bias: low complexity; that stretch reads GLQRSSQIHASSSQTHVSSSQAQAAASSHA. Polar residues-rich tracts occupy residues 899-909 and 969-980; these read SEAQDASSLTQ and STPSPGNGSQGS. Pro residues predominate over residues 1030–1044; sequence ATSPKPLTSPKPSVS. Positions 1045–1056 are enriched in low complexity; that stretch reads PKPSLSAKPSVS. N6-acetyllysine is present on lysine 1052. 3 stretches are compositionally biased toward polar residues: residues 1073–1148, 1158–1169, and 1308–1317; these read PSSS…NSLS, RGSNLNSSGANR, and HLQQAFNDGG. Serine 1107 carries the post-translational modification Phosphoserine. An N6-acetyllysine modification is found at lysine 1132. The span at 1321 to 1330 shows a compositional bias: basic and acidic residues; that stretch reads GDTKLPRKPQ.

It belongs to the ubinuclein family.

In Rattus norvegicus (Rat), this protein is Ubinuclein-2 (Ubn2).